The chain runs to 340 residues: UDP-glucose 4-epimerase (340 aa).

NAD(+)-binding positions include 16 to 17 (YI), 37 to 42 (IDNNKN), 60 to 61 (DL), 82 to 86 (FAAKT), Ser-127, Tyr-154, Lys-158, and Phe-182. Substrate is bound by residues Ser-127 and Tyr-154. Tyr-154 functions as the Proton acceptor in the catalytic mechanism. Substrate-binding positions include Asn-183, 199–200 (TL), 216–218 (FLY), Arg-231, and 295–298 (RSWD).

Belongs to the NAD(P)-dependent epimerase/dehydratase family. As to quaternary structure, homodimer. Requires NAD(+) as cofactor.

The enzyme catalyses UDP-alpha-D-glucose = UDP-alpha-D-galactose. It participates in carbohydrate metabolism; galactose metabolism. Its function is as follows. Involved in the metabolism of galactose. Catalyzes the conversion of UDP-galactose (UDP-Gal) to UDP-glucose (UDP-Glc) through a mechanism involving the transient reduction of NAD. This Mycoplasma genitalium (strain ATCC 33530 / DSM 19775 / NCTC 10195 / G37) (Mycoplasmoides genitalium) protein is UDP-glucose 4-epimerase (galE).